We begin with the raw amino-acid sequence, 455 residues long: Chromosomal replication initiator protein DnaA (455 aa).

The tract at residues Met1–Ile74 is domain I, interacts with DnaA modulators. The interval Ile74–Leu117 is domain II. A domain III, AAA+ region region spans residues Lys118–Ala334. Residues Gly162, Gly164, Lys165, and Thr166 each coordinate ATP. Positions Thr335 to His455 are domain IV, binds dsDNA.

Belongs to the DnaA family. Oligomerizes as a right-handed, spiral filament on DNA at oriC.

The protein localises to the cytoplasm. In terms of biological role, plays an essential role in the initiation and regulation of chromosomal replication. ATP-DnaA binds to the origin of replication (oriC) to initiate formation of the DNA replication initiation complex once per cell cycle. Binds the DnaA box (a 9 base pair repeat at the origin) and separates the double-stranded (ds)DNA. Forms a right-handed helical filament on oriC DNA; dsDNA binds to the exterior of the filament while single-stranded (ss)DNA is stabiized in the filament's interior. The ATP-DnaA-oriC complex binds and stabilizes one strand of the AT-rich DNA unwinding element (DUE), permitting loading of DNA polymerase. After initiation quickly degrades to an ADP-DnaA complex that is not apt for DNA replication. Binds acidic phospholipids. The protein is Chromosomal replication initiator protein DnaA of Lactobacillus helveticus (strain DPC 4571).